We begin with the raw amino-acid sequence, 460 residues long: A-type ATP synthase subunit B (460 aa).

This sequence belongs to the ATPase alpha/beta chains family. Has multiple subunits with at least A(3), B(3), C, D, E, F, H, I and proteolipid K(x).

Its subcellular location is the cell membrane. Its function is as follows. Component of the A-type ATP synthase that produces ATP from ADP in the presence of a proton gradient across the membrane. The B chain is a regulatory subunit. In Methanosarcina barkeri (strain Fusaro / DSM 804), this protein is A-type ATP synthase subunit B.